Here is a 507-residue protein sequence, read N- to C-terminus: Trigger factor (507 aa).

The 82-residue stretch at 162-243 (GDFVSLDLSA…VRGVKEKELP (82 aa)) folds into the PPIase FKBP-type domain. The interval 434–507 (NLPRRPSGEA…DSELPASETK (74 aa)) is disordered. Acidic residues predominate over residues 442 to 460 (EAEDDVRDISDELDAEELE). Low complexity predominate over residues 461-488 (VPAAAPSAEVTAAAGDEATATATATDAD).

This sequence belongs to the FKBP-type PPIase family. Tig subfamily.

The protein localises to the cytoplasm. The enzyme catalyses [protein]-peptidylproline (omega=180) = [protein]-peptidylproline (omega=0). Involved in protein export. Acts as a chaperone by maintaining the newly synthesized protein in an open conformation. Functions as a peptidyl-prolyl cis-trans isomerase. This is Trigger factor from Parafrankia sp. (strain EAN1pec).